A 588-amino-acid chain; its full sequence is Glutamyl-tRNA(Gln) amidotransferase subunit B, mitochondrial (588 aa).

Residues 1–109 constitute a mitochondrion transit peptide; it reads MLRSWIGSGT…RAPTSTSETP (109 aa). Residues 22–35 are compositionally biased toward low complexity; sequence SSLPSPKASFSSAP. The disordered stretch occupies residues 22–50; the sequence is SSLPSPKASFSSAPNRYLQPPTSADRVPL.

The protein belongs to the GatB/GatE family. GatB subfamily. Subunit of the heterotrimeric GatCAB amidotransferase (AdT) complex, composed of A, B and C subunits.

The protein resides in the mitochondrion. The catalysed reaction is L-glutamyl-tRNA(Gln) + L-glutamine + ATP + H2O = L-glutaminyl-tRNA(Gln) + L-glutamate + ADP + phosphate + H(+). In terms of biological role, allows the formation of correctly charged Gln-tRNA(Gln) through the transamidation of misacylated Glu-tRNA(Gln) in the mitochondria. The reaction takes place in the presence of glutamine and ATP through an activated gamma-phospho-Glu-tRNA(Gln). In Penicillium rubens (strain ATCC 28089 / DSM 1075 / NRRL 1951 / Wisconsin 54-1255) (Penicillium chrysogenum), this protein is Glutamyl-tRNA(Gln) amidotransferase subunit B, mitochondrial.